The primary structure comprises 62 residues: Small ribosomal subunit protein eS27 (62 aa).

The Zn(2+) site is built by cysteine 17, cysteine 20, cysteine 36, and cysteine 39. The C4-type zinc finger occupies 17 to 39 (CNDCENEQIIFGSASRKITCVVC).

Belongs to the eukaryotic ribosomal protein eS27 family. In terms of assembly, part of the 30S ribosomal subunit. Zn(2+) is required as a cofactor.

The polypeptide is Small ribosomal subunit protein eS27 (Methanosarcina barkeri (strain Fusaro / DSM 804)).